A 249-amino-acid chain; its full sequence is DNA repair protein RecO (249 aa).

This sequence belongs to the RecO family.

Its function is as follows. Involved in DNA repair and RecF pathway recombination. This is DNA repair protein RecO from Rhodopseudomonas palustris (strain HaA2).